Here is a 305-residue protein sequence, read N- to C-terminus: Protoheme IX farnesyltransferase 2 (305 aa).

7 helical membrane-spanning segments follow: residues 38-58 (LITT…SFLG), 60-80 (LNTV…SCAV), 115-135 (ILLI…AAVI), 157-177 (INTV…WTAV), 181-201 (IGVV…PHFL), 236-256 (VACL…IVIL), and 285-305 (FVYS…FTLF).

This sequence belongs to the UbiA prenyltransferase family. Protoheme IX farnesyltransferase subfamily. As to quaternary structure, interacts with CtaA.

The protein resides in the cell membrane. The enzyme catalyses heme b + (2E,6E)-farnesyl diphosphate + H2O = Fe(II)-heme o + diphosphate. The protein operates within porphyrin-containing compound metabolism; heme O biosynthesis; heme O from protoheme: step 1/1. Its function is as follows. Converts heme B (protoheme IX) to heme O by substitution of the vinyl group on carbon 2 of heme B porphyrin ring with a hydroxyethyl farnesyl side group. This chain is Protoheme IX farnesyltransferase 2, found in Bacillus velezensis (strain DSM 23117 / BGSC 10A6 / LMG 26770 / FZB42) (Bacillus amyloliquefaciens subsp. plantarum).